A 419-amino-acid polypeptide reads, in one-letter code: Squamosa promoter-binding-like protein 2 (419 aa).

The interval 77–96 is disordered; it reads SAEVRTHNFTSETGESLPGE. The SBP-type zinc finger occupies 166-243; it reads TPHCQVEGCN…SDHNARRRKP (78 aa). Positions 169, 174, 191, 194, 210, 213, 217, and 229 each coordinate Zn(2+). Positions 226-242 match the Bipartite nuclear localization signal motif; the sequence is KRSCRRRLSDHNARRRK. A disordered region spans residues 230 to 249; it reads RRRLSDHNARRRKPNPGRTY.

Zn(2+) serves as cofactor.

Its subcellular location is the nucleus. In terms of biological role, trans-acting factor that binds specifically to the consensus nucleotide sequence 5'-TNCGTACAA-3'. This is Squamosa promoter-binding-like protein 2 (SPL2) from Arabidopsis thaliana (Mouse-ear cress).